The chain runs to 630 residues: DNA topoisomerase 4 subunit B (630 aa).

Residues Y5, N42, D69, 110-116, and K334 contribute to the ATP site; that span reads GLHGVGI. The 114-residue stretch at 412–525 folds into the Toprim domain; that stretch reads TELFLVEGDS…HGHVYVALPP (114 aa). Mg(2+) contacts are provided by E418, D490, and D492.

Belongs to the type II topoisomerase family. ParE type 1 subfamily. As to quaternary structure, heterotetramer composed of ParC and ParE. Requires Mg(2+) as cofactor. The cofactor is Mn(2+). It depends on Ca(2+) as a cofactor.

The catalysed reaction is ATP-dependent breakage, passage and rejoining of double-stranded DNA.. Its activity is regulated as follows. Pyrrolopyrimidines inhibit both GyrB and its paralog in topoisomerase IV (parE). Its function is as follows. Topoisomerase IV is essential for chromosome segregation; it is the principal protein responsible for decatenating newly replicated chromosomes. It relaxes supercoiled DNA. MukB stimulates the relaxation activity of topoisomerase IV and also has a modest effect on decatenation. This chain is DNA topoisomerase 4 subunit B, found in Escherichia coli (strain K12).